A 95-amino-acid polypeptide reads, in one-letter code: UPF0235 protein A2cp1_1215 (95 aa).

It belongs to the UPF0235 family.

The sequence is that of UPF0235 protein A2cp1_1215 from Anaeromyxobacter dehalogenans (strain 2CP-1 / ATCC BAA-258).